Here is a 527-residue protein sequence, read N- to C-terminus: Probable pectinesterase/pectinesterase inhibitor 32 (527 aa).

An N-terminal signal peptide occupies residues 1-24 (MAKFRQMGSSIFFLFLIIISLCSA). Positions 25 to 165 (HKEAFSSTDL…GTTVRNLLTM (141 aa)) are pectinesterase inhibitor 32. N-linked (GlcNAc...) asparagine glycosylation is found at Asn-110, Asn-209, Asn-224, and Asn-280. The interval 214 to 511 (DAVVAADGTG…FTVSQLIQGN (298 aa)) is pectinesterase 32. Thr-289 and Gln-319 together coordinate substrate. Catalysis depends on Asp-342, which acts as the Proton donor; for pectinesterase activity. Cys-356 and Cys-376 are oxidised to a cystine. The active-site Nucleophile; for pectinesterase activity is Asp-363. Asn-423 carries N-linked (GlcNAc...) asparagine glycosylation. Arg-431 and Trp-433 together coordinate substrate. N-linked (GlcNAc...) asparagine glycosylation is found at Asn-494 and Asn-501.

This sequence in the N-terminal section; belongs to the PMEI family. In the C-terminal section; belongs to the pectinesterase family. Expressed in siliques.

The protein localises to the secreted. It localises to the cell wall. It carries out the reaction [(1-&gt;4)-alpha-D-galacturonosyl methyl ester](n) + n H2O = [(1-&gt;4)-alpha-D-galacturonosyl](n) + n methanol + n H(+). It participates in glycan metabolism; pectin degradation; 2-dehydro-3-deoxy-D-gluconate from pectin: step 1/5. Functionally, acts in the modification of cell walls via demethylesterification of cell wall pectin. This Arabidopsis thaliana (Mouse-ear cress) protein is Probable pectinesterase/pectinesterase inhibitor 32 (PME32).